The chain runs to 140 residues: Nucleoside diphosphate kinase (140 aa).

Residues lysine 10, phenylalanine 58, arginine 86, threonine 92, arginine 103, and asparagine 113 each contribute to the ATP site. Catalysis depends on histidine 116, which acts as the Pros-phosphohistidine intermediate.

It belongs to the NDK family. In terms of assembly, homotetramer. Mg(2+) is required as a cofactor.

Its subcellular location is the cytoplasm. The enzyme catalyses a 2'-deoxyribonucleoside 5'-diphosphate + ATP = a 2'-deoxyribonucleoside 5'-triphosphate + ADP. It catalyses the reaction a ribonucleoside 5'-diphosphate + ATP = a ribonucleoside 5'-triphosphate + ADP. Major role in the synthesis of nucleoside triphosphates other than ATP. The ATP gamma phosphate is transferred to the NDP beta phosphate via a ping-pong mechanism, using a phosphorylated active-site intermediate. In Haemophilus influenzae (strain PittEE), this protein is Nucleoside diphosphate kinase.